We begin with the raw amino-acid sequence, 159 residues long: FCS-Like Zinc finger 2 (159 aa).

The FLZ-type zinc-finger motif lies at 75–119; the sequence is HFLDSCFLCKKRLGDNRDIFMYRGDTPFCSEECREEQIERDEAKE. Residues 113 to 122 show a composition bias toward basic and acidic residues; sequence ERDEAKEKKQ. Residues 113–159 form a disordered region; sequence ERDEAKEKKQSLSTSVKAMRRNEKRSSSSSPTRSRNYAFRTGTVAAA.

Belongs to the FLZ family. Interacts with KIN10 and KIN11 via its FLZ-type zinc finger domain. Interacts with KINB1, KINB2, KINB3 and SNF4 via its N-terminal part. Forms heterodimer with FLZ7, FLZ10, FLZ11, FLZ12, FLZ15, FLZ17 and FLZ18 in vitro.

In terms of biological role, may act as an adapter to facilitate the interaction of SnRK1 complex with effector proteins, conferring tissue- and stimulus-type specific differences in the SnRK1 regulation pathway. In Arabidopsis thaliana (Mouse-ear cress), this protein is FCS-Like Zinc finger 2.